Consider the following 507-residue polypeptide: Sterol 14-alpha demethylase CYP51A (507 aa).

Residues 7–29 (YPLWVLVALFAVIIANLLYQQLP) form a helical membrane-spanning segment. A lanosterol-binding site is contributed by Tyr-105. Cys-449 is a binding site for heme.

This sequence belongs to the cytochrome P450 family. The cofactor is heme.

The protein resides in the endoplasmic reticulum membrane. It catalyses the reaction a 14alpha-methyl steroid + 3 reduced [NADPH--hemoprotein reductase] + 3 O2 = a Delta(14) steroid + formate + 3 oxidized [NADPH--hemoprotein reductase] + 4 H2O + 4 H(+). The enzyme catalyses a 14alpha-methyl steroid + reduced [NADPH--hemoprotein reductase] + O2 = a 14alpha-hydroxymethyl steroid + oxidized [NADPH--hemoprotein reductase] + H2O + H(+). The catalysed reaction is a 14alpha-hydroxymethyl steroid + reduced [NADPH--hemoprotein reductase] + O2 = a 14alpha-formyl steroid + oxidized [NADPH--hemoprotein reductase] + 2 H2O + H(+). It carries out the reaction a 14alpha-formyl steroid + reduced [NADPH--hemoprotein reductase] + O2 = a Delta(14) steroid + formate + oxidized [NADPH--hemoprotein reductase] + H2O + 2 H(+). It catalyses the reaction lanosterol + 3 reduced [NADPH--hemoprotein reductase] + 3 O2 = 4,4-dimethyl-5alpha-cholesta-8,14,24-trien-3beta-ol + formate + 3 oxidized [NADPH--hemoprotein reductase] + 4 H2O + 4 H(+). The enzyme catalyses lanosterol + reduced [NADPH--hemoprotein reductase] + O2 = 32-hydroxylanosterol + oxidized [NADPH--hemoprotein reductase] + H2O + H(+). The catalysed reaction is 32-hydroxylanosterol + reduced [NADPH--hemoprotein reductase] + O2 = 32-oxolanosterol + oxidized [NADPH--hemoprotein reductase] + 2 H2O + H(+). It carries out the reaction 32-oxolanosterol + reduced [NADPH--hemoprotein reductase] + O2 = 4,4-dimethyl-5alpha-cholesta-8,14,24-trien-3beta-ol + formate + oxidized [NADPH--hemoprotein reductase] + H2O + 2 H(+). It catalyses the reaction eburicol + 3 reduced [NADPH--hemoprotein reductase] + 3 O2 = 14-demethyleburicol + formate + 3 oxidized [NADPH--hemoprotein reductase] + 4 H2O + 4 H(+). The enzyme catalyses eburicol + reduced [NADPH--hemoprotein reductase] + O2 = 32-hydroxyeburicol + oxidized [NADPH--hemoprotein reductase] + H2O + H(+). The catalysed reaction is 32-hydroxyeburicol + reduced [NADPH--hemoprotein reductase] + O2 = 32-oxoeburicol + oxidized [NADPH--hemoprotein reductase] + 2 H2O + H(+). It carries out the reaction 32-oxoeburicol + reduced [NADPH--hemoprotein reductase] + O2 = 14-demethyleburicol + formate + oxidized [NADPH--hemoprotein reductase] + H2O + 2 H(+). Its pathway is steroid metabolism; ergosterol biosynthesis. Its function is as follows. Together with cyp51B and cyp51C, encodes the sterol 14alpha-demethylase that plays a critical role in the third module of ergosterol biosynthesis pathway, being ergosterol the major sterol component in fungal membranes that participates in a variety of functions. CYP51A encodes the sterol 14-alpha-demethylase induced on ergosterol depletion and is responsible for the intrinsic variation in azole sensitivity. The third module or late pathway involves the ergosterol synthesis itself through consecutive reactions that mainly occur in the endoplasmic reticulum (ER) membrane. In filamentous fungi, during the initial step of this module, lanosterol (lanosta-8,24-dien-3beta-ol) can be metabolized to eburicol. Sterol 14alpha-demethylase catalyzes the three-step oxidative removal of the 14alpha-methyl group (C-32) of both these sterols in the form of formate, and converts eburicol and lanosterol to 14-demethyleburicol (4,4,24-trimethylergosta-8,14,24(28)-trienol) and 4,4-dimethyl-5alpha-cholesta-8,14,24-trien-3beta-ol, respectively, which are further metabolized by other enzymes in the pathway to ergosterol. Can also use substrates not intrinsic to fungi, such as 24,25-dihydrolanosterol (DHL), producing 4,4'-dimethyl-8,14-cholestadien-3-beta-ol, but at lower rates than the endogenous substrates. This chain is Sterol 14-alpha demethylase CYP51A, found in Gibberella zeae (strain ATCC MYA-4620 / CBS 123657 / FGSC 9075 / NRRL 31084 / PH-1) (Wheat head blight fungus).